The primary structure comprises 245 residues: Orotidine 5'-phosphate decarboxylase (245 aa).

Residues Asp-22, Lys-44, Asp-71–Thr-80, Thr-131, Arg-192, Gln-201, Gly-221, and Arg-222 each bind substrate. Lys-73 (proton donor) is an active-site residue.

It belongs to the OMP decarboxylase family. Type 1 subfamily. In terms of assembly, homodimer.

It catalyses the reaction orotidine 5'-phosphate + H(+) = UMP + CO2. The protein operates within pyrimidine metabolism; UMP biosynthesis via de novo pathway; UMP from orotate: step 2/2. Catalyzes the decarboxylation of orotidine 5'-monophosphate (OMP) to uridine 5'-monophosphate (UMP). This Escherichia coli O139:H28 (strain E24377A / ETEC) protein is Orotidine 5'-phosphate decarboxylase.